The chain runs to 476 residues: Siroheme synthase (476 aa).

Positions M1–L203 are precorrin-2 dehydrogenase /sirohydrochlorin ferrochelatase. NAD(+)-binding positions include T22–I23 and Q43–K44. S128 bears the Phosphoserine mark. The segment at G214–A476 is uroporphyrinogen-III C-methyltransferase. Residue P223 coordinates S-adenosyl-L-methionine. The Proton acceptor role is filled by D246. K268 (proton donor) is an active-site residue. Residues G299–D301, V304, T329–A330, M381, and G410 each bind S-adenosyl-L-methionine.

It in the N-terminal section; belongs to the precorrin-2 dehydrogenase / sirohydrochlorin ferrochelatase family. The protein in the C-terminal section; belongs to the precorrin methyltransferase family.

It carries out the reaction uroporphyrinogen III + 2 S-adenosyl-L-methionine = precorrin-2 + 2 S-adenosyl-L-homocysteine + H(+). The enzyme catalyses precorrin-2 + NAD(+) = sirohydrochlorin + NADH + 2 H(+). The catalysed reaction is siroheme + 2 H(+) = sirohydrochlorin + Fe(2+). The protein operates within cofactor biosynthesis; adenosylcobalamin biosynthesis; precorrin-2 from uroporphyrinogen III: step 1/1. It functions in the pathway cofactor biosynthesis; adenosylcobalamin biosynthesis; sirohydrochlorin from precorrin-2: step 1/1. It participates in porphyrin-containing compound metabolism; siroheme biosynthesis; precorrin-2 from uroporphyrinogen III: step 1/1. Its pathway is porphyrin-containing compound metabolism; siroheme biosynthesis; siroheme from sirohydrochlorin: step 1/1. The protein operates within porphyrin-containing compound metabolism; siroheme biosynthesis; sirohydrochlorin from precorrin-2: step 1/1. Its function is as follows. Multifunctional enzyme that catalyzes the SAM-dependent methylations of uroporphyrinogen III at position C-2 and C-7 to form precorrin-2 via precorrin-1. Then it catalyzes the NAD-dependent ring dehydrogenation of precorrin-2 to yield sirohydrochlorin. Finally, it catalyzes the ferrochelation of sirohydrochlorin to yield siroheme. The protein is Siroheme synthase of Mannheimia succiniciproducens (strain KCTC 0769BP / MBEL55E).